The following is a 276-amino-acid chain: Undecaprenyl-diphosphatase (276 aa).

Transmembrane regions (helical) follow at residues 1–21, 41–61, 97–117, 121–141, 155–175, 200–220, 231–251, and 256–276; these read MHWL…FLPV, LLLD…VFFA, ALLI…FHKI, LFAS…LLWA, VTWG…LPGI, FLLS…DASA, LGGI…LAIV, and LWWF…ANFV.

This sequence belongs to the UppP family.

Its subcellular location is the cell inner membrane. The enzyme catalyses di-trans,octa-cis-undecaprenyl diphosphate + H2O = di-trans,octa-cis-undecaprenyl phosphate + phosphate + H(+). In terms of biological role, catalyzes the dephosphorylation of undecaprenyl diphosphate (UPP). Confers resistance to bacitracin. The sequence is that of Undecaprenyl-diphosphatase from Desulfatibacillum aliphaticivorans.